A 253-amino-acid polypeptide reads, in one-letter code: MTRYKATIAYDGTDFAGFQSQTNQRTVQEEIEKVLSKLNSFEPVILQGSGRTDSGVHAFGQVIHFDLNGKARDLERLRFGLDTQTPADIAVKKVELVPDDWHARYQKHEKTYEYYLENSVTRSPFHRHSKAYFRYPLNFERMQGAMVKLVGQHDFTGFTASGSSVDDKVRTIYQAEIIQLDKENFKFIFRGNGFLYKQVRNMVGTVIKIGNDRMPVSQIDKILTSKNRNFAGPTAAPEGLYLKEVKYEPINEI.

D53 serves as the catalytic Nucleophile. Y112 serves as a coordination point for substrate.

The protein belongs to the tRNA pseudouridine synthase TruA family. In terms of assembly, homodimer.

It catalyses the reaction uridine(38/39/40) in tRNA = pseudouridine(38/39/40) in tRNA. In terms of biological role, formation of pseudouridine at positions 38, 39 and 40 in the anticodon stem and loop of transfer RNAs. In Lactococcus lactis subsp. cremoris (strain MG1363), this protein is tRNA pseudouridine synthase A.